Consider the following 167-residue polypeptide: UPF0303 protein mlr5144 (167 aa).

It belongs to the UPF0303 family.

The sequence is that of UPF0303 protein mlr5144 from Mesorhizobium japonicum (strain LMG 29417 / CECT 9101 / MAFF 303099) (Mesorhizobium loti (strain MAFF 303099)).